The following is a 1066-amino-acid chain: Bifunctional cytochrome P450/NADPH--P450 reductase (1066 aa).

The cytochrome P450 stretch occupies residues 1–480 (MAESVPIPEP…LAGNGATSSS (480 aa)). Cysteine 407 contributes to the heme binding site. An NADPH-P-450 reductase region spans residues 481–1066 (THNIKAAANL…NERFATDVFD (586 aa)). A Flavodoxin-like domain is found at 500 to 641 (MAIFYGSNSG…DFEAWEDIVL (142 aa)). Residues 506–511 (SNSGTC), 554–557 (SYEG), cysteine 588, and threonine 596 contribute to the FMN site. The 229-residue stretch at 676–904 (QDVEEALVVA…RASSEAFHLP (229 aa)) folds into the FAD-binding FR-type domain.

The protein in the N-terminal section; belongs to the cytochrome P450 family. The cofactor is FAD. FMN is required as a cofactor. Requires heme as cofactor.

The protein resides in the membrane. The enzyme catalyses an organic molecule + reduced [NADPH--hemoprotein reductase] + O2 = an alcohol + oxidized [NADPH--hemoprotein reductase] + H2O + H(+). It carries out the reaction 2 oxidized [cytochrome P450] + NADPH = 2 reduced [cytochrome P450] + NADP(+) + H(+). With respect to regulation, stimulated NADPH--cytochrome reductase activity in the presence of substrate. Inhibited by fatty acid substrates longer than 13 carbons and the degree of inhibition increases with increasing chain length. Functions as a fatty acid monooxygenase. Catalyzes hydroxylation of fatty acids at omega-1, omega-2 and omega-3 positions. Shows activity toward fatty acids with a chain length of 9-18 carbons with optimum chain lengths of 12-14 carbons (lauric, tridecylic and myristic acids). Can also use shorter saturated fatty acids with a chain length of 9 or 10 carbons as substrates. Also displays a NADPH-dependent reductase activity in the C-terminal domain, which allows electron transfer from NADPH to the heme iron of the cytochrome P450 N-terminal domain. In Fusarium oxysporum (Fusarium vascular wilt), this protein is Bifunctional cytochrome P450/NADPH--P450 reductase.